The chain runs to 511 residues: Probable lipid II flippase MurJ (511 aa).

A run of 11 helical transmembrane segments spans residues 25–45 (DILIASIFGASMFTDAFFISF), 85–105 (SSILGFMSFFLLLLTILGGFF), 133–153 (IMFPYILLISLSSLCSSILNS), 156–178 (YFSIPAFSPIFLNISIIFFSVFF), 245–265 (ISLIINTIFSSLLNSGSISWI), 271–291 (LIEFPVGILGVSLSTVLFTSL), 315–335 (LIVSLPGSVILFFLAKPVIIV), 356–376 (LYSCGLISFIFVKILSSAFYA), 400–420 (FLIFYFQHAGIALSLSITSWV), 442–462 (FIFIIYIILATLVMIVILFVV), and 481–501 (LFFGKYVSGITYLFMMNILGI).

The protein belongs to the MurJ/MviN family.

The protein localises to the cell inner membrane. It participates in cell wall biogenesis; peptidoglycan biosynthesis. Involved in peptidoglycan biosynthesis. Transports lipid-linked peptidoglycan precursors from the inner to the outer leaflet of the cytoplasmic membrane. The protein is Probable lipid II flippase MurJ of Buchnera aphidicola subsp. Acyrthosiphon pisum (strain APS) (Acyrthosiphon pisum symbiotic bacterium).